We begin with the raw amino-acid sequence, 270 residues long: Karrikin insensitive 2 receptor CA (270 aa).

Residue Ser-95 is the Nucleophile of the active site. Catalysis depends on residues Asp-217 and His-246.

Belongs to the AB hydrolase superfamily. As to expression, expressed in stigma.

The protein localises to the nucleus. It localises to the cytoplasm. Its function is as follows. Hydrolase which may be involved in plant olfaction during volatile communication. This is Karrikin insensitive 2 receptor CA from Petunia hybrida (Petunia).